The primary structure comprises 346 residues: Dihydroorotase (346 aa).

Zn(2+) contacts are provided by His-13 and His-15. Substrate is bound by residues 15-17 (HLR) and Asn-41. 3 residues coordinate Zn(2+): Lys-99, His-136, and His-174. N6-carboxylysine is present on Lys-99. Residue His-136 participates in substrate binding. Leu-219 is a binding site for substrate. Residue Asp-247 coordinates Zn(2+). Residue Asp-247 is part of the active site. Residues His-251 and Ala-263 each contribute to the substrate site.

The protein belongs to the metallo-dependent hydrolases superfamily. DHOase family. Class II DHOase subfamily. As to quaternary structure, homodimer. Requires Zn(2+) as cofactor.

The enzyme catalyses (S)-dihydroorotate + H2O = N-carbamoyl-L-aspartate + H(+). It participates in pyrimidine metabolism; UMP biosynthesis via de novo pathway; (S)-dihydroorotate from bicarbonate: step 3/3. In terms of biological role, catalyzes the reversible cyclization of carbamoyl aspartate to dihydroorotate. The polypeptide is Dihydroorotase (Rhizobium leguminosarum bv. trifolii (strain WSM2304)).